Reading from the N-terminus, the 455-residue chain is Ribulose bisphosphate carboxylase large chain (455 aa).

The residue at position 5 (K5) is an N6,N6,N6-trimethyllysine. N114 and T164 together coordinate substrate. Residue K166 is the Proton acceptor of the active site. K168 contacts substrate. K192, D194, and E195 together coordinate Mg(2+). K192 bears the N6-carboxylysine mark. H285 functions as the Proton acceptor in the catalytic mechanism. R286, H318, and S370 together coordinate substrate.

This sequence belongs to the RuBisCO large chain family. Type I subfamily. Heterohexadecamer of 8 large chains and 8 small chains. Mg(2+) is required as a cofactor.

It localises to the plastid. The protein localises to the chloroplast. The catalysed reaction is 2 (2R)-3-phosphoglycerate + 2 H(+) = D-ribulose 1,5-bisphosphate + CO2 + H2O. The enzyme catalyses D-ribulose 1,5-bisphosphate + O2 = 2-phosphoglycolate + (2R)-3-phosphoglycerate + 2 H(+). Its function is as follows. RuBisCO catalyzes two reactions: the carboxylation of D-ribulose 1,5-bisphosphate, the primary event in carbon dioxide fixation, as well as the oxidative fragmentation of the pentose substrate in the photorespiration process. Both reactions occur simultaneously and in competition at the same active site. The protein is Ribulose bisphosphate carboxylase large chain of Tamarindus indica (Tamarind).